The chain runs to 277 residues: Tryptophan synthase alpha chain (277 aa).

Catalysis depends on proton acceptor residues glutamate 42 and glutamate 53.

This sequence belongs to the TrpA family. In terms of assembly, tetramer of two alpha and two beta chains.

The catalysed reaction is (1S,2R)-1-C-(indol-3-yl)glycerol 3-phosphate + L-serine = D-glyceraldehyde 3-phosphate + L-tryptophan + H2O. The protein operates within amino-acid biosynthesis; L-tryptophan biosynthesis; L-tryptophan from chorismate: step 5/5. In terms of biological role, the alpha subunit is responsible for the aldol cleavage of indoleglycerol phosphate to indole and glyceraldehyde 3-phosphate. This chain is Tryptophan synthase alpha chain, found in Natronomonas pharaonis (strain ATCC 35678 / DSM 2160 / CIP 103997 / JCM 8858 / NBRC 14720 / NCIMB 2260 / Gabara) (Halobacterium pharaonis).